The sequence spans 717 residues: UvrABC system protein C (717 aa).

The GIY-YIG domain maps to 16–95 (DAPGVYRFHD…IKEYDPRFNV (80 aa)). Positions 208-243 (DTLIRKLDREMRQASEELEFERAARLRDDLEALRRA) constitute a UVR domain. 2 disordered regions span residues 517–555 (TAAG…GRPR) and 696–717 (HAAL…GESQ). Composition is skewed to basic and acidic residues over residues 541-553 (EAER…ETGR) and 707-717 (ESRDNAEGESQ).

Belongs to the UvrC family. As to quaternary structure, interacts with UvrB in an incision complex.

It is found in the cytoplasm. The UvrABC repair system catalyzes the recognition and processing of DNA lesions. UvrC both incises the 5' and 3' sides of the lesion. The N-terminal half is responsible for the 3' incision and the C-terminal half is responsible for the 5' incision. The chain is UvrABC system protein C from Saccharopolyspora erythraea (strain ATCC 11635 / DSM 40517 / JCM 4748 / NBRC 13426 / NCIMB 8594 / NRRL 2338).